The sequence spans 480 residues: Aspartyl/glutamyl-tRNA(Asn/Gln) amidotransferase subunit B (480 aa).

This sequence belongs to the GatB/GatE family. GatB subfamily. As to quaternary structure, heterotrimer of A, B and C subunits.

It catalyses the reaction L-glutamyl-tRNA(Gln) + L-glutamine + ATP + H2O = L-glutaminyl-tRNA(Gln) + L-glutamate + ADP + phosphate + H(+). The catalysed reaction is L-aspartyl-tRNA(Asn) + L-glutamine + ATP + H2O = L-asparaginyl-tRNA(Asn) + L-glutamate + ADP + phosphate + 2 H(+). Allows the formation of correctly charged Asn-tRNA(Asn) or Gln-tRNA(Gln) through the transamidation of misacylated Asp-tRNA(Asn) or Glu-tRNA(Gln) in organisms which lack either or both of asparaginyl-tRNA or glutaminyl-tRNA synthetases. The reaction takes place in the presence of glutamine and ATP through an activated phospho-Asp-tRNA(Asn) or phospho-Glu-tRNA(Gln). This Streptococcus agalactiae serotype Ia (strain ATCC 27591 / A909 / CDC SS700) protein is Aspartyl/glutamyl-tRNA(Asn/Gln) amidotransferase subunit B.